The primary structure comprises 351 residues: Soluble interferon alpha/beta receptor OPG204 (351 aa).

Positions 1-19 (MTMKMMVHIYFVSLLLLLF) are cleaved as a signal peptide. Ig-like C2-type domains are found at residues 65 to 147 (LGEP…RSHI) and 155 to 237 (PKTY…IVVS). 2 cysteine pairs are disulfide-bonded: C73–C129 and C172–C221. N-linked (GlcNAc...) asparagine; by host glycosylation is found at N117, N182, N261, N269, and N321. The Ig-like V-type domain occupies 246–345 (PSQDHRFKLI…HNYYFEKTLT (100 aa)). A disulfide bridge connects residues C272 and C333.

It belongs to the interleukin-1 receptor family. Interacts with host IFNA1.

It localises to the secreted. In terms of biological role, counteracts the antiviral effects of host IFN-alpha/beta and key IFN-inducible proteins involved in viral RNA degradation suxh as host OAS1. Acts as a soluble IFN-alpha receptor and thus inhibits the interaction between host IFN-alpha and its receptor. The protein is Soluble interferon alpha/beta receptor OPG204 (OPG204) of Vaccinia virus (strain Western Reserve) (VACV).